Here is a 98-residue protein sequence, read N- to C-terminus: Aspartyl/glutamyl-tRNA(Asn/Gln) amidotransferase subunit C (98 aa).

Belongs to the GatC family. Heterotrimer of A, B and C subunits.

It carries out the reaction L-glutamyl-tRNA(Gln) + L-glutamine + ATP + H2O = L-glutaminyl-tRNA(Gln) + L-glutamate + ADP + phosphate + H(+). The enzyme catalyses L-aspartyl-tRNA(Asn) + L-glutamine + ATP + H2O = L-asparaginyl-tRNA(Asn) + L-glutamate + ADP + phosphate + 2 H(+). Allows the formation of correctly charged Asn-tRNA(Asn) or Gln-tRNA(Gln) through the transamidation of misacylated Asp-tRNA(Asn) or Glu-tRNA(Gln) in organisms which lack either or both of asparaginyl-tRNA or glutaminyl-tRNA synthetases. The reaction takes place in the presence of glutamine and ATP through an activated phospho-Asp-tRNA(Asn) or phospho-Glu-tRNA(Gln). This chain is Aspartyl/glutamyl-tRNA(Asn/Gln) amidotransferase subunit C, found in Gloeothece citriformis (strain PCC 7424) (Cyanothece sp. (strain PCC 7424)).